Here is a 233-residue protein sequence, read N- to C-terminus: uncharacterized protein (233 aa).

It belongs to the asfivirus H233R family.

This is an uncharacterized protein from African swine fever virus (isolate Warthog/Namibia/Wart80/1980) (ASFV).